Consider the following 362-residue polypeptide: Mannose-1-phosphate guanyltransferase (362 aa).

Belongs to the transferase hexapeptide repeat family.

The protein localises to the cytoplasm. It carries out the reaction alpha-D-mannose 1-phosphate + GTP + H(+) = GDP-alpha-D-mannose + diphosphate. It functions in the pathway nucleotide-sugar biosynthesis; GDP-alpha-D-mannose biosynthesis; GDP-alpha-D-mannose from alpha-D-mannose 1-phosphate (GTP route): step 1/1. Functionally, involved in cell wall synthesis where it is required for glycosylation. Involved in cell cycle progression through cell-size checkpoint. The protein is Mannose-1-phosphate guanyltransferase (MPG1) of Debaryomyces hansenii (strain ATCC 36239 / CBS 767 / BCRC 21394 / JCM 1990 / NBRC 0083 / IGC 2968) (Yeast).